The primary structure comprises 257 residues: Diacetyl reductase [(S)-acetoin forming] (257 aa).

6 to 30 (IITGSAGGLGKGIAERLANDGFNIV) provides a ligand contact to NAD(+). Substrate is bound at residue S139. Y152 serves as the catalytic Proton acceptor. K156 is an active-site residue.

Belongs to the short-chain dehydrogenases/reductases (SDR) family.

The catalysed reaction is (S)-acetoin + NAD(+) = diacetyl + NADH + H(+). Functionally, catalyzes the irreversible reduction of 2,3-butanediol to (S)-acetoin in the presence of NADH. The polypeptide is Diacetyl reductase [(S)-acetoin forming] (butA) (Staphylococcus epidermidis (strain ATCC 35984 / DSM 28319 / BCRC 17069 / CCUG 31568 / BM 3577 / RP62A)).